A 318-amino-acid polypeptide reads, in one-letter code: N-acetyl-gamma-glutamyl-phosphate reductase (318 aa).

The active site involves Cys132.

Belongs to the NAGSA dehydrogenase family. Type 1 subfamily.

It is found in the cytoplasm. The catalysed reaction is N-acetyl-L-glutamate 5-semialdehyde + phosphate + NADP(+) = N-acetyl-L-glutamyl 5-phosphate + NADPH + H(+). Its pathway is amino-acid biosynthesis; L-arginine biosynthesis; N(2)-acetyl-L-ornithine from L-glutamate: step 3/4. In terms of biological role, catalyzes the NADPH-dependent reduction of N-acetyl-5-glutamyl phosphate to yield N-acetyl-L-glutamate 5-semialdehyde. The sequence is that of N-acetyl-gamma-glutamyl-phosphate reductase from Azobacteroides pseudotrichonymphae genomovar. CFP2.